The following is a 166-amino-acid chain: NAD(P)H-quinone oxidoreductase subunit I, chloroplastic (166 aa).

4Fe-4S ferredoxin-type domains follow at residues 55–84 and 95–124; these read GRIHFEFDKCIACEVCVRVCPIDLPVVDWK and LNYSIDFGICIFCGNCVEYCPTNCLSMTEE. 8 residues coordinate [4Fe-4S] cluster: Cys-64, Cys-67, Cys-70, Cys-74, Cys-104, Cys-107, Cys-110, and Cys-114.

It belongs to the complex I 23 kDa subunit family. In terms of assembly, NDH is composed of at least 16 different subunits, 5 of which are encoded in the nucleus. [4Fe-4S] cluster is required as a cofactor.

It is found in the plastid. The protein resides in the chloroplast thylakoid membrane. The catalysed reaction is a plastoquinone + NADH + (n+1) H(+)(in) = a plastoquinol + NAD(+) + n H(+)(out). It catalyses the reaction a plastoquinone + NADPH + (n+1) H(+)(in) = a plastoquinol + NADP(+) + n H(+)(out). Its function is as follows. NDH shuttles electrons from NAD(P)H:plastoquinone, via FMN and iron-sulfur (Fe-S) centers, to quinones in the photosynthetic chain and possibly in a chloroplast respiratory chain. The immediate electron acceptor for the enzyme in this species is believed to be plastoquinone. Couples the redox reaction to proton translocation, and thus conserves the redox energy in a proton gradient. The protein is NAD(P)H-quinone oxidoreductase subunit I, chloroplastic of Hofmeisteria fasciculata (Helogyne fasciculata).